The chain runs to 142 residues: uncharacterized protein (142 aa).

The N-acetyltransferase domain maps to 1–138 (MLEKLAEAHP…SFMILVKPLA (138 aa)).

This is an uncharacterized protein from Bacillus subtilis (strain 168).